A 1488-amino-acid polypeptide reads, in one-letter code: Chromosome partition protein MukB (1488 aa).

Position 34–41 (34–41 (GGNGAGKS)) interacts with ATP. Coiled coils occupy residues 326-418 (LEAD…QYNQ), 444-472 (LDTF…QTAH), and 509-602 (RHLA…QRAP). Residues 666 to 783 (PGGAEDQRLN…SLPIFGRAAR (118 aa)) are flexible hinge. 3 coiled-coil regions span residues 835–923 (EAEI…AKLE), 977–1116 (EMLS…AKAG), and 1209–1265 (VEAI…LQSV). Positions 1049-1074 (ADSGAEERARQRRDELHAQLSNNRSR) are disordered. Basic and acidic residues predominate over residues 1051-1065 (SGAEERARQRRDELH).

This sequence belongs to the SMC family. MukB subfamily. Homodimerization via its hinge domain. Binds to DNA via its C-terminal region. Interacts, and probably forms a ternary complex, with MukE and MukF via its C-terminal region. The complex formation is stimulated by calcium or magnesium. Interacts with tubulin-related protein FtsZ.

The protein resides in the cytoplasm. Its subcellular location is the nucleoid. Functionally, plays a central role in chromosome condensation, segregation and cell cycle progression. Functions as a homodimer, which is essential for chromosome partition. Involved in negative DNA supercoiling in vivo, and by this means organize and compact chromosomes. May achieve or facilitate chromosome segregation by condensation DNA from both sides of a centrally located replisome during cell division. In Salmonella arizonae (strain ATCC BAA-731 / CDC346-86 / RSK2980), this protein is Chromosome partition protein MukB.